Here is a 91-residue protein sequence, read N- to C-terminus: Alpha-defensin 31 (91 aa).

The first 19 residues, 1–19 (MKKLVLLFALVLLAFQVQA), serve as a signal peptide directing secretion. The propeptide occupies 20 to 65 (DSIQNTDEETKTEEQQGEEDQAVSVSFGDPQGSGLQDAALGWGRRC). Residues 22-55 (IQNTDEETKTEEQQGEEDQAVSVSFGDPQGSGLQ) are disordered. Tandem repeats lie at residues 65-67 (CPR), 68-70 (CPP), 71-73 (CPR), 77-79 (CPR), 80-82 (CPT), and 83-85 (CPR). A 6 X 3 AA tandem repeats of C-P-X region spans residues 65-85 (CPRCPPCPRCSWCPRCPTCPR).

It belongs to the alpha-defensin family. Paneth cells of the small bowel.

It is found in the secreted. Its function is as follows. Apparent precursor of a secreted, cationic, proline- and cysteine-rich peptide that contains Cys-Pro-Xaa repeats. Unlike cryptdin, the proposed mature peptide region lacks the structural motif characteristic of defensins. It may have microbicidal activities. This chain is Alpha-defensin 31, found in Mus musculus (Mouse).